Reading from the N-terminus, the 379-residue chain is Transcription factor TIP2 (379 aa).

The interval 144–184 (MVGPFESSPTPRSGGGRKRSRATAGFHGGGPANGVEKKEKQ) is disordered. The interval 173-186 (GPANGVEKKEKQRR) is basic motif; degenerate. A bHLH domain is found at 173 to 222 (GPANGVEKKEKQRRLRLTEKYNALMLLIPNRTKEDRATVISDAIEYIQEL). The tract at residues 187-222 (LRLTEKYNALMLLIPNRTKEDRATVISDAIEYIQEL) is helix-loop-helix motif.

This sequence belongs to the bHLH protein family. In terms of assembly, homodimer. Interacts with TDR, but not with EAT1. As to expression, highly expressed in anthers; strong expression in the middle layer and tapetum, and weak expression in the endothecium.

Its subcellular location is the nucleus. Transcription factor that binds to the E-box-containing promoter regions of the transcription factors TDR and EAT1, activating their expression. May have a role in specifying the cell pattern of the inner anther walls and functioning in meiosis progression. Required for male reproduction. Acts downstream of UDT1 and GAMYB, but upstream of TDR1 and EAT1 in pollen development. This is Transcription factor TIP2 (TIP2) from Oryza sativa subsp. japonica (Rice).